A 370-amino-acid chain; its full sequence is Chaperone protein DnaJ (370 aa).

Positions 4–68 (DYYQVLGVSK…QKRAAYDRFG (65 aa)) constitute a J domain. The CR-type zinc-finger motif lies at 133–211 (GIEKNISFSS…CHGMGRYHKQ (79 aa)). Residues C146, C149, C163, C166, C185, C188, C199, and C202 each coordinate Zn(2+). CXXCXGXG motif repeat units lie at residues 146-153 (CDACHGTG), 163-170 (CDSCGGVG), 185-192 (CHKCQGNG), and 199-206 (CKKCHGMG).

It belongs to the DnaJ family. In terms of assembly, homodimer. Zn(2+) serves as cofactor.

It localises to the cytoplasm. Participates actively in the response to hyperosmotic and heat shock by preventing the aggregation of stress-denatured proteins and by disaggregating proteins, also in an autonomous, DnaK-independent fashion. Unfolded proteins bind initially to DnaJ; upon interaction with the DnaJ-bound protein, DnaK hydrolyzes its bound ATP, resulting in the formation of a stable complex. GrpE releases ADP from DnaK; ATP binding to DnaK triggers the release of the substrate protein, thus completing the reaction cycle. Several rounds of ATP-dependent interactions between DnaJ, DnaK and GrpE are required for fully efficient folding. Also involved, together with DnaK and GrpE, in the DNA replication of plasmids through activation of initiation proteins. The polypeptide is Chaperone protein DnaJ (Rickettsia typhi (strain ATCC VR-144 / Wilmington)).